Reading from the N-terminus, the 136-residue chain is S-protein homolog 17 (136 aa).

The signal sequence occupies residues methionine 1–alanine 22.

Belongs to the plant self-incompatibility (S1) protein family.

The protein resides in the secreted. The sequence is that of S-protein homolog 17 from Arabidopsis thaliana (Mouse-ear cress).